Here is a 309-residue protein sequence, read N- to C-terminus: Mitochondrial substrate carrier family protein ancA (309 aa).

Solcar repeat units lie at residues 10–102, 114–203, and 216–299; these read SSFV…YKKF, KFFI…AKGI, and ASWG…IQKL. 5 consecutive transmembrane segments (helical) span residues 12 to 41, 79 to 103, 113 to 133, 181 to 201, and 215 to 235; these read FVKD…LLLQ, LANV…KKFF, TKFF…SLLF, VSVG…DTAK, and WASW…SYPF. ADP is bound by residues arginine 84 and lysine 96. ADP is bound at residue arginine 239. The segment at 239–244 is important for transport activity; that stretch reads RRRMMM. A Nucleotide carrier signature motif motif is present at residues 239-244; that stretch reads RRRMMM. The helical transmembrane segment at 276–293 threads the bilayer; that stretch reads ALSNAIRGSGGALVLVIY.

This sequence belongs to the mitochondrial carrier (TC 2.A.29) family. Monomer.

It is found in the mitochondrion inner membrane. It carries out the reaction ADP(in) + ATP(out) = ADP(out) + ATP(in). With respect to regulation, the matrix-open state (m-state) is inhibited by the membrane-permeable bongkrekic acid (BKA). The cytoplasmic-open state (c-state) is inhibited by the membrane-impermeable toxic inhibitor carboxyatractyloside (CATR). Functionally, ADP:ATP antiporter that mediates import of ADP into the mitochondrial matrix for ATP synthesis, and export of ATP out to fuel the cell. Cycles between the cytoplasmic-open state (c-state) and the matrix-open state (m-state): operates by the alternating access mechanism with a single substrate-binding site intermittently exposed to either the cytosolic (c-state) or matrix (m-state) side of the inner mitochondrial membrane. The protein is Mitochondrial substrate carrier family protein ancA (ancA) of Dictyostelium discoideum (Social amoeba).